A 640-amino-acid polypeptide reads, in one-letter code: Threonine--tRNA ligase (640 aa).

One can recognise a TGS domain in the interval 1–61 (MPIITLPNGD…TEDATLQIIT (61 aa)). A catalytic region spans residues 242 to 533 (DHRKIGKALD…LIEHYAGFMP (292 aa)). C333, H384, and H510 together coordinate Zn(2+).

The protein belongs to the class-II aminoacyl-tRNA synthetase family. Homodimer. Zn(2+) is required as a cofactor.

It localises to the cytoplasm. It carries out the reaction tRNA(Thr) + L-threonine + ATP = L-threonyl-tRNA(Thr) + AMP + diphosphate + H(+). Functionally, catalyzes the attachment of threonine to tRNA(Thr) in a two-step reaction: L-threonine is first activated by ATP to form Thr-AMP and then transferred to the acceptor end of tRNA(Thr). Also edits incorrectly charged L-seryl-tRNA(Thr). This Acinetobacter baylyi (strain ATCC 33305 / BD413 / ADP1) protein is Threonine--tRNA ligase.